Consider the following 363-residue polypeptide: Histidinol-phosphate aminotransferase (363 aa).

Lys227 bears the N6-(pyridoxal phosphate)lysine mark.

It belongs to the class-II pyridoxal-phosphate-dependent aminotransferase family. Histidinol-phosphate aminotransferase subfamily. As to quaternary structure, homodimer. Pyridoxal 5'-phosphate is required as a cofactor.

The catalysed reaction is L-histidinol phosphate + 2-oxoglutarate = 3-(imidazol-4-yl)-2-oxopropyl phosphate + L-glutamate. It functions in the pathway amino-acid biosynthesis; L-histidine biosynthesis; L-histidine from 5-phospho-alpha-D-ribose 1-diphosphate: step 7/9. The protein is Histidinol-phosphate aminotransferase of Akkermansia muciniphila (strain ATCC BAA-835 / DSM 22959 / JCM 33894 / BCRC 81048 / CCUG 64013 / CIP 107961 / Muc).